Consider the following 101-residue polypeptide: Secreted enzymes activator (101 aa).

A compositionally biased stretch (basic residues) spans 1–10; that stretch reads MSRRRRRASA. Disordered stretches follow at residues 1–26 and 45–101; these read MSRRRRRASATRRSAAVSPPHTPYGS and TRLA…NGRG. Over residues 45 to 60 the composition is skewed to low complexity; the sequence is TRLAASSRASRAAVGS. Residues 55-74 constitute a DNA-binding region (H-T-H motif); that stretch reads RAAVGSFDGAKNRPASSRRQ.

Functionally, increases the production of several extracellular enzymes, like alkaline phosphatase, amylase, protease or lipase. When present in high concentrations, delays the production of pigments and sporulation. In Streptomyces griseus, this protein is Secreted enzymes activator (saf).